Here is a 1773-residue protein sequence, read N- to C-terminus: Plexin-2 (1773 aa).

Positions 1–19 (MLFIESAFLVLTSLSAAEA) are cleaved as a signal peptide. Residues 20–436 (ATPFEGGVKQ…MPYGIVMEEL (417 aa)) form the Sema domain. At 20–1130 (ATPFEGGVKQ…SDHALPSRLS (1111 aa)) the chain is on the extracellular side. Residue asparagine 65 is glycosylated (N-linked (GlcNAc...) asparagine). 9 disulfides stabilise this stretch: cysteine 83–cysteine 90, cysteine 117–cysteine 125, cysteine 239–cysteine 341, cysteine 255–cysteine 292, cysteine 310–cysteine 328, cysteine 439–cysteine 456, cysteine 445–cysteine 479, cysteine 448–cysteine 465, and cysteine 459–cysteine 471. N-linked (GlcNAc...) asparagine glycosylation occurs at asparagine 241. The 43-residue stretch at 438–480 (TCAHHESCTDCQVSVDPLCQWCHPTQSCTTSSRCSGPLTTQCP) folds into the PSI 1 domain. N-linked (GlcNAc...) asparagine glycosylation is present at asparagine 494. Residues cysteine 516 and cysteine 538 are joined by a disulfide bond. N-linked (GlcNAc...) asparagine glycosylation is present at asparagine 566. Residues 571–608 (DCAGYSTCSTCMSSEFGCQWCSHKCSSSCGSASAKACV) form the PSI 2 domain. 2 N-linked (GlcNAc...) asparagine glycosylation sites follow: asparagine 670 and asparagine 693. Residues 698 to 739 (SCSNLAADCSSCLALSPSLSCGWCNRKCSHECHESKATAVCD) enclose the PSI 3 domain. 3 consecutive IPT/TIG domains span residues 741 to 829 (PKID…FSFV), 831 to 916 (VSIF…FEYR), and 919 to 1006 (PSVN…FLMD). Asparagine 855, asparagine 877, asparagine 975, and asparagine 1007 each carry an N-linked (GlcNAc...) asparagine glycan. The chain crosses the membrane as a helical span at residues 1131–1151 (FLILGLLLFTVITLIVMCLIF). Positions 1150-1188 (IFKRRRQEREKEYRKIQLQMENLENNVRKECKQAFAELQ) form a coiled coil. At 1152 to 1764 (KRRRQEREKE…LHVCLETDNH (613 aa)) the chain is on the cytoplasmic side.

The protein belongs to the plexin family. As to quaternary structure, interacts with mab-20.

Its subcellular location is the cell membrane. In terms of biological role, involved as a receptor for mab-20/sema-2a in the formation or stabilization of cell-cell contacts at several stages of epithelial morphogenesis. In early embryonic development, required for proper ventral closure of the epidermis. During male tail morphogenesis, involved in precursor cell sorting and in the formation of distinct sensory rays. Involved in axon guidance of SDQL neurons during neurogenesis. This Caenorhabditis briggsae protein is Plexin-2 (plx-2).